Reading from the N-terminus, the 117-residue chain is Probable non-functional immunoglobulinn kappa variable 1-37 (117 aa).

The N-terminal stretch at 1–22 (MDMRVPAQLLGLLLLWVPGARC) is a signal peptide. Residues 24-117 (IQLTQSPSSL…YYGQRTYNAP (94 aa)) enclose the Ig-like domain.

As to quaternary structure, most probably, the immunoglobulin is not assembled due to incorrect folding of light chain. Immunoglobulins are composed of two identical heavy chains and two identical light chains; disulfide-linked.

It is found in the secreted. It localises to the cell membrane. In terms of biological role, probable non-functional open reading frame (ORF) of V region of the variable domain of immunoglobulin light chains. Non-functional ORF generally cannot participate in the synthesis of a productive immunoglobulin chain due to altered V-(D)-J or switch recombination and/or splicing site (at mRNA level) and/or conserved amino acid change (protein level). Immunoglobulins, also known as antibodies, are membrane-bound or secreted glycoproteins produced by B lymphocytes. In the recognition phase of humoral immunity, the membrane-bound immunoglobulins serve as receptors which, upon binding of a specific antigen, trigger the clonal expansion and differentiation of B lymphocytes into immunoglobulins-secreting plasma cells. Secreted immunoglobulins mediate the effector phase of humoral immunity, which results in the elimination of bound antigens. The antigen binding site is formed by the variable domain of one heavy chain, together with that of its associated light chain. Thus, each immunoglobulin has two antigen binding sites with remarkable affinity for a particular antigen. The variable domains are assembled by a process called V-(D)-J rearrangement and can then be subjected to somatic hypermutations which, after exposure to antigen and selection, allow affinity maturation for a particular antigen. The protein is Probable non-functional immunoglobulinn kappa variable 1-37 of Homo sapiens (Human).